The following is a 124-amino-acid chain: Small ribosomal subunit protein uS12 (124 aa).

Aspartate 89 is subject to 3-methylthioaspartic acid.

It belongs to the universal ribosomal protein uS12 family. In terms of assembly, part of the 30S ribosomal subunit. Contacts proteins S8 and S17. May interact with IF1 in the 30S initiation complex.

In terms of biological role, with S4 and S5 plays an important role in translational accuracy. Its function is as follows. Interacts with and stabilizes bases of the 16S rRNA that are involved in tRNA selection in the A site and with the mRNA backbone. Located at the interface of the 30S and 50S subunits, it traverses the body of the 30S subunit contacting proteins on the other side and probably holding the rRNA structure together. The combined cluster of proteins S8, S12 and S17 appears to hold together the shoulder and platform of the 30S subunit. The protein is Small ribosomal subunit protein uS12 of Haemophilus ducreyi (strain 35000HP / ATCC 700724).